The chain runs to 297 residues: UDP-N-acetylglucosamine transporter TMEM241 (297 aa).

The next 10 helical transmembrane spans lie at 7–29, 32–52, 69–89, 93–113, 121–141, 146–166, 187–207, 211–231, 250–270, and 271–291; these read LLGL…VLSV, FTYP…LLHM, VLIW…GSKA, LAVP…CGYQ, TSLS…CLPF, FDPD…SYKI, IFSM…FGAL, FLYF…GFFL, WILC…DMAL, and TKAT…LVFS.

Belongs to the nucleotide-sugar transporter family. SLC35A subfamily. As to expression, widely expressed with high expression in lung.

It localises to the golgi apparatus. The protein localises to the cis-Golgi network membrane. Golgi-localized UDP-N-acetylglucosamine (UDP-GlcNAc) transporter that transports UDP-N-acetylglucosamine into Golgi lumen. Contributes to lysosomal targeting of NPC2, a key protein required for lysosomal cholesterol exiting, and that utilizes the mannose-6-phosphate (M6P) modification pathway for its lysosomal targeting. The protein is UDP-N-acetylglucosamine transporter TMEM241 (Tmem241) of Mus musculus (Mouse).